Here is a 154-residue protein sequence, read N- to C-terminus: UPF0225 protein YE2246 (154 aa).

This sequence belongs to the UPF0225 family.

This chain is UPF0225 protein YE2246, found in Yersinia enterocolitica serotype O:8 / biotype 1B (strain NCTC 13174 / 8081).